The primary structure comprises 166 residues: Urease accessory protein UreE (166 aa).

It belongs to the UreE family.

Its subcellular location is the cytoplasm. Its function is as follows. Involved in urease metallocenter assembly. Binds nickel. Probably functions as a nickel donor during metallocenter assembly. This chain is Urease accessory protein UreE, found in Pseudomonas savastanoi pv. phaseolicola (strain 1448A / Race 6) (Pseudomonas syringae pv. phaseolicola (strain 1448A / Race 6)).